The chain runs to 101 residues: UPF0235 protein CJA_0091 (101 aa).

Belongs to the UPF0235 family.

This is UPF0235 protein CJA_0091 from Cellvibrio japonicus (strain Ueda107) (Pseudomonas fluorescens subsp. cellulosa).